A 109-amino-acid chain; its full sequence is Hainantoxin-XVIII-2 (109 aa).

The signal sequence occupies residues 1 to 18; that stretch reads MKLSIIIIATSLVIAVVA. A propeptide spanning residues 19–46 is cleaved from the precursor; that stretch reads FPSKDSKAIENDKTEQRMEIVVQETARA. Disulfide bonds link C47/C62, C59/C108, and C61/C81.

Belongs to the neurotoxin 25 family. F7 subfamily. Expressed by the venom gland.

It localises to the secreted. In terms of biological role, putative ion channel inhibitor. This is Hainantoxin-XVIII-2 from Cyriopagopus hainanus (Chinese bird spider).